The following is a 478-amino-acid chain: Protein nucleotidyltransferase YdiU (478 aa).

ATP is bound by residues G84, G86, R87, K107, D119, G120, R170, and R177. D246 acts as the Proton acceptor in catalysis. Mg(2+) contacts are provided by N247 and D256. Residue D256 participates in ATP binding.

The protein belongs to the SELO family. It depends on Mg(2+) as a cofactor. Requires Mn(2+) as cofactor.

It catalyses the reaction L-seryl-[protein] + ATP = 3-O-(5'-adenylyl)-L-seryl-[protein] + diphosphate. The enzyme catalyses L-threonyl-[protein] + ATP = 3-O-(5'-adenylyl)-L-threonyl-[protein] + diphosphate. It carries out the reaction L-tyrosyl-[protein] + ATP = O-(5'-adenylyl)-L-tyrosyl-[protein] + diphosphate. The catalysed reaction is L-histidyl-[protein] + UTP = N(tele)-(5'-uridylyl)-L-histidyl-[protein] + diphosphate. It catalyses the reaction L-seryl-[protein] + UTP = O-(5'-uridylyl)-L-seryl-[protein] + diphosphate. The enzyme catalyses L-tyrosyl-[protein] + UTP = O-(5'-uridylyl)-L-tyrosyl-[protein] + diphosphate. Its function is as follows. Nucleotidyltransferase involved in the post-translational modification of proteins. It can catalyze the addition of adenosine monophosphate (AMP) or uridine monophosphate (UMP) to a protein, resulting in modifications known as AMPylation and UMPylation. The protein is Protein nucleotidyltransferase YdiU of Shigella boydii serotype 18 (strain CDC 3083-94 / BS512).